Reading from the N-terminus, the 259-residue chain is Phosphate import ATP-binding protein PstB (259 aa).

Residues 13–254 (LEVNNLNFHY…PRLQRTEDYI (242 aa)) enclose the ABC transporter domain. 45–52 (GPSGCGKS) is a binding site for ATP.

It belongs to the ABC transporter superfamily. Phosphate importer (TC 3.A.1.7) family. In terms of assembly, the complex is composed of two ATP-binding proteins (PstB), two transmembrane proteins (PstC and PstA) and a solute-binding protein (PstS).

Its subcellular location is the cell inner membrane. It catalyses the reaction phosphate(out) + ATP + H2O = ADP + 2 phosphate(in) + H(+). Functionally, part of the ABC transporter complex PstSACB involved in phosphate import. Responsible for energy coupling to the transport system. The sequence is that of Phosphate import ATP-binding protein PstB from Pasteurella multocida (strain Pm70).